Here is a 574-residue protein sequence, read N- to C-terminus: Sentrin-specific protease 3 (574 aa).

A disordered region spans residues 1–125 (MKETIQGTGS…PTHRKTCSQR (125 aa)). Phosphoserine is present on residues serine 54, serine 73, and serine 75. Residues 74–93 (ASEEEEEEEEEEDEDEEEEV) show a composition bias toward acidic residues. The segment covering 112–125 (RPSRPTHRKTCSQR) has biased composition (basic residues). 2 short sequence motifs (nuclear localization signal) span residues 125 to 128 (RRRR) and 153 to 159 (RHRGRRR). Residues 161-181 (LAHPKNHLSPQQGGATPQVPS) form a disordered region. Serine 169 is subject to Phosphoserine. Threonine 176 carries the phosphothreonine modification. Phosphoserine is present on residues serine 181, serine 188, serine 212, and serine 232. Positions 386-543 (HVLTMDDLGT…AFVLQYCKHL (158 aa)) are protease. Active-site residues include histidine 465 and aspartate 482. Cysteine 532 acts as the Nucleophile in catalysis.

This sequence belongs to the peptidase C48 family. Component of some MLL1/MLL complex, at least composed of the core components KMT2A/MLL1, ASH2L, HCFC1/HCF1, WDR5 and RBBP5, as well as the facultative components BACC1, CHD8, E2F6, HSP70, INO80C, KANSL1, LAS1L, MAX, MCRS1, MGA, MYST1/MOF, PELP1, PHF20, PRP31, RING2, RUVB1/TIP49A, RUVB2/TIP49B, SENP3, TAF1, TAF4, TAF6, TAF7, TAF9 and TEX10. Interacts with EP300, NPM1 and CDCA8. Component of the 5FMC complex, at least composed of PELP1, LAS1L, TEX10, WDR18 and SENP3; the complex interacts with methylated CHTOP and ZNF148. Interacts with NOL9. Interacts with CCAR2.

It is found in the nucleus. The protein resides in the nucleolus. The protein localises to the nucleoplasm. Its subcellular location is the cytoplasm. On oxidative stress, SENP3 degradation is blocked by inhibition of its ubiquitination, which stabilizes it as it accumulates in the nucleoplasm. In terms of biological role, protease that releases SUMO2 and SUMO3 monomers from sumoylated substrates, but has only weak activity against SUMO1 conjugates. Deconjugates SUMO2 from MEF2D, which increases its transcriptional activation capability. Deconjugates SUMO2 and SUMO3 from CDCA8. Redox sensor that, when redistributed into nucleoplasm, can act as an effector to enhance HIF1A transcriptional activity by desumoylating EP300. Required for rRNA processing through deconjugation of SUMO2 and SUMO3 from nucleophosmin, NPM1. Plays a role in the regulation of sumoylation status of ZNF148. Functions as a component of the Five Friends of Methylated CHTOP (5FMC) complex; the 5FMC complex is recruited to ZNF148 by methylated CHTOP, leading to desumoylation of ZNF148 and subsequent transactivation of ZNF148 target genes. Deconjugates SUMO2 from KAT5. Catalyzes desumoylation of MRE11. The chain is Sentrin-specific protease 3 from Homo sapiens (Human).